Reading from the N-terminus, the 423-residue chain is Histidine--tRNA ligase (423 aa).

This sequence belongs to the class-II aminoacyl-tRNA synthetase family. Homodimer.

It is found in the cytoplasm. The enzyme catalyses tRNA(His) + L-histidine + ATP = L-histidyl-tRNA(His) + AMP + diphosphate + H(+). The protein is Histidine--tRNA ligase of Desulfosudis oleivorans (strain DSM 6200 / JCM 39069 / Hxd3) (Desulfococcus oleovorans).